The primary structure comprises 31 residues: Branched-chain-amino-acid aminotransferase, mitochondrial (31 aa).

The N-terminal 27 residues, 1–27 (MAAAALRQIWARKFLPVPWLLCGPRRY), are a transit peptide targeting the mitochondrion.

It belongs to the class-IV pyridoxal-phosphate-dependent aminotransferase family. Homodimer. It depends on pyridoxal 5'-phosphate as a cofactor.

It localises to the mitochondrion. The catalysed reaction is L-leucine + 2-oxoglutarate = 4-methyl-2-oxopentanoate + L-glutamate. It catalyses the reaction L-isoleucine + 2-oxoglutarate = (S)-3-methyl-2-oxopentanoate + L-glutamate. The enzyme catalyses L-valine + 2-oxoglutarate = 3-methyl-2-oxobutanoate + L-glutamate. Its function is as follows. Catalyzes the first reaction in the catabolism of the essential branched chain amino acids leucine, isoleucine, and valine. May also function as a transporter of branched chain alpha-keto acids. The polypeptide is Branched-chain-amino-acid aminotransferase, mitochondrial (BCAT2) (Sus scrofa (Pig)).